A 310-amino-acid polypeptide reads, in one-letter code: Tagatose-6-phosphate kinase (310 aa).

Belongs to the carbohydrate kinase PfkB family. LacC subfamily.

It carries out the reaction D-tagatofuranose 6-phosphate + ATP = D-tagatofuranose 1,6-bisphosphate + ADP + H(+). The protein operates within carbohydrate metabolism; D-tagatose 6-phosphate degradation; D-glyceraldehyde 3-phosphate and glycerone phosphate from D-tagatose 6-phosphate: step 1/2. The chain is Tagatose-6-phosphate kinase from Staphylococcus aureus (strain bovine RF122 / ET3-1).